The chain runs to 197 residues: UDP-N-acetylglucosamine transferase subunit alg13 (197 aa).

The tract at residues Val-174–Asp-197 is disordered.

The protein belongs to the glycosyltransferase 28 family. Heterodimer with alg14 to form a functional enzyme.

The protein localises to the endoplasmic reticulum. It carries out the reaction an N-acetyl-alpha-D-glucosaminyl-diphospho-di-trans,poly-cis-dolichol + UDP-N-acetyl-alpha-D-glucosamine = an N,N'-diacetylchitobiosyl-diphospho-di-trans,poly-cis-dolichol + UDP + H(+). Functionally, involved in protein N-glycosylation. Essential for the second step of the dolichol-linked oligosaccharide pathway. This is UDP-N-acetylglucosamine transferase subunit alg13 (alg13) from Aspergillus fumigatus (strain ATCC MYA-4609 / CBS 101355 / FGSC A1100 / Af293) (Neosartorya fumigata).